The following is a 387-amino-acid chain: 23S rRNA (uracil(747)-C(5))-methyltransferase RlmC (387 aa).

The [4Fe-4S] cluster site is built by cysteine 3, cysteine 11, cysteine 14, and cysteine 86. S-adenosyl-L-methionine contacts are provided by glutamine 211, phenylalanine 240, glutamate 269, and asparagine 319. Cysteine 346 (nucleophile) is an active-site residue.

The protein belongs to the class I-like SAM-binding methyltransferase superfamily. RNA M5U methyltransferase family. RlmC subfamily.

The catalysed reaction is uridine(747) in 23S rRNA + S-adenosyl-L-methionine = 5-methyluridine(747) in 23S rRNA + S-adenosyl-L-homocysteine + H(+). Functionally, catalyzes the formation of 5-methyl-uridine at position 747 (m5U747) in 23S rRNA. The polypeptide is 23S rRNA (uracil(747)-C(5))-methyltransferase RlmC (Pasteurella multocida (strain Pm70)).